Reading from the N-terminus, the 152-residue chain is Large ribosomal subunit protein uL22 (152 aa).

It belongs to the universal ribosomal protein uL22 family. In terms of assembly, part of the 50S ribosomal subunit.

This protein binds specifically to 23S rRNA. It makes multiple contacts with different domains of the 23S rRNA in the assembled 50S subunit and ribosome. In terms of biological role, the globular domain of the protein is located near the polypeptide exit tunnel on the outside of the subunit, while an extended beta-hairpin is found that lines the wall of the exit tunnel in the center of the 70S ribosome. This chain is Large ribosomal subunit protein uL22, found in Cenarchaeum symbiosum (strain A).